The following is a 287-amino-acid chain: Nucleotide-binding protein Hhal_2130 (287 aa).

11–18 (GLSGSGKS) is an ATP binding site. 63–66 (DARN) serves as a coordination point for GTP.

The protein belongs to the RapZ-like family.

Its function is as follows. Displays ATPase and GTPase activities. The polypeptide is Nucleotide-binding protein Hhal_2130 (Halorhodospira halophila (strain DSM 244 / SL1) (Ectothiorhodospira halophila (strain DSM 244 / SL1))).